We begin with the raw amino-acid sequence, 399 residues long: Tryptophan synthase beta chain (399 aa).

Residue lysine 90 is modified to N6-(pyridoxal phosphate)lysine.

It belongs to the TrpB family. In terms of assembly, tetramer of two alpha and two beta chains. Pyridoxal 5'-phosphate is required as a cofactor.

The enzyme catalyses (1S,2R)-1-C-(indol-3-yl)glycerol 3-phosphate + L-serine = D-glyceraldehyde 3-phosphate + L-tryptophan + H2O. It participates in amino-acid biosynthesis; L-tryptophan biosynthesis; L-tryptophan from chorismate: step 5/5. In terms of biological role, the beta subunit is responsible for the synthesis of L-tryptophan from indole and L-serine. The chain is Tryptophan synthase beta chain from Bacillus pumilus (strain SAFR-032).